A 122-amino-acid chain; its full sequence is Large ribosomal subunit protein uL22c (122 aa).

Belongs to the universal ribosomal protein uL22 family. In terms of assembly, part of the 50S ribosomal subunit.

Its subcellular location is the plastid. It localises to the chloroplast. Its function is as follows. This protein binds specifically to 23S rRNA. Functionally, the globular domain of the protein is located near the polypeptide exit tunnel on the outside of the subunit, while an extended beta-hairpin is found that lines the wall of the exit tunnel in the center of the 70S ribosome. The polypeptide is Large ribosomal subunit protein uL22c (rpl22) (Adiantum capillus-veneris (Maidenhair fern)).